The chain runs to 500 residues: Beta-glucosidase 2 (500 aa).

The signal sequence occupies residues 1–24; sequence MGAAAAAGFFFVLLFLSVQGGAVG. The a beta-D-glucoside site is built by Gln-44 and His-144. The active-site Proton donor is Glu-190. Cysteines 209 and 218 form a disulfide. Asn-222 carries an N-linked (GlcNAc...) asparagine glycan. Tyr-334 and Glu-403 together coordinate a beta-D-glucoside. Glu-403 serves as the catalytic Nucleophile. Asn-410 carries N-linked (GlcNAc...) asparagine glycosylation. Trp-445 contributes to the a beta-D-glucoside binding site.

The protein belongs to the glycosyl hydrolase 1 family.

It carries out the reaction Hydrolysis of terminal, non-reducing beta-D-glucosyl residues with release of beta-D-glucose.. The protein is Beta-glucosidase 2 (BGLU2) of Oryza sativa subsp. japonica (Rice).